The primary structure comprises 317 residues: Ribonuclease Z (317 aa).

7 residues coordinate Zn(2+): histidine 62, histidine 64, aspartate 66, histidine 67, histidine 139, aspartate 210, and histidine 268. Aspartate 66 serves as the catalytic Proton acceptor.

This sequence belongs to the RNase Z family. Homodimer. It depends on Zn(2+) as a cofactor.

It catalyses the reaction Endonucleolytic cleavage of RNA, removing extra 3' nucleotides from tRNA precursor, generating 3' termini of tRNAs. A 3'-hydroxy group is left at the tRNA terminus and a 5'-phosphoryl group is left at the trailer molecule.. Functionally, zinc phosphodiesterase, which displays some tRNA 3'-processing endonuclease activity. Probably involved in tRNA maturation, by removing a 3'-trailer from precursor tRNA. This chain is Ribonuclease Z, found in Picosynechococcus sp. (strain ATCC 27264 / PCC 7002 / PR-6) (Agmenellum quadruplicatum).